A 549-amino-acid polypeptide reads, in one-letter code: Neurofilament light polypeptide (549 aa).

S2 is subject to N-acetylserine. Residues 2–92 (SSFYSEPYYS…KSIRTQEKAQ (91 aa)) form a head region. O-linked (GlcNAc) threonine glycosylation occurs at T21. An Asymmetric dimethylarginine; alternate modification is found at R23. R23 is subject to Omega-N-methylarginine; alternate. S27 carries an O-linked (GlcNAc) serine glycan. R30 carries the post-translational modification Omega-N-methylarginine. Residue Y43 is modified to Phosphotyrosine. A phosphoserine mark is found at S56, S66, and S102. The region spanning 89 to 400 (EKAQLQDLND…KLLEGEETRL (312 aa)) is the IF rod domain. The tract at residues 93–124 (LQDLNDRFASFIERVHELEQQNKVLEAQLLVL) is coil 1A. The tract at residues 125–137 (RQKHSEPSRFRAL) is linker 1. Residues 138–233 (YEQEIRDLRL…KVHEEEIAEL (96 aa)) are coil 1B. The segment at 234–252 (QAQIQYAQISVEMDVSSKP) is linker 12. The interval 253 to 271 (DLSAALKDIRAQYEKLAAK) is coil 2A. The segment at 272 to 280 (NMQNAEEWF) is linker 2. A coil 2B region spans residues 281–396 (KSRFTVLTES…AAYRKLLEGE (116 aa)). An epitope; recognized by IF-specific monoclonal antibody region spans residues 381 to 391 (ALDIEIAAYRK). The interval 397 to 443 (ETRLSFTSVGSLTTGYSQSSQVFGRSAYGGLQTSSYLMSTRSFPSYY) is tail, subdomain A. Positions 397 to 549 (ETRLSFTSVG…GEEQATKKKD (153 aa)) are tail. The tract at residues 444 to 549 (TSHVQEEQIE…GEEQATKKKD (106 aa)) is tail, subdomain B (acidic). Residues 462 to 549 (KAEEAKDEPP…GEEQATKKKD (88 aa)) are disordered. Residues 471–534 (PSEGEAEEEG…ETKEAEEEEK (64 aa)) are compositionally biased toward acidic residues. At S472 the chain carries Phosphoserine. The residue at position 526 (T526) is a Phosphothreonine. A compositionally biased stretch (basic and acidic residues) spans 535–549 (KDEGAGEEQATKKKD).

The protein belongs to the intermediate filament family. As to quaternary structure, forms homodimers (in vitro). Forms heterodimers with NEFH or NEFM; which can further hetero-oligomerize (in vitro). Forms heterodimers with INA (in vitro). Interacts with ARHGEF28. Interacts with TRIM2. Post-translationally, O-glycosylated. In terms of processing, phosphorylated in the head and rod regions by the PKC kinase PKN1, leading to the inhibition of polymerization. Ubiquitinated in the presence of TRIM2 and UBE2D1.

The protein resides in the cell projection. The protein localises to the axon. It is found in the cytoplasm. Its subcellular location is the cytoskeleton. In terms of biological role, neurofilaments usually contain three intermediate filament proteins: NEFL, NEFM, and NEFH which are involved in the maintenance of neuronal caliber. May additionally cooperate with the neuronal intermediate filament proteins PRPH and INA to form neuronal filamentous networks. The protein is Neurofilament light polypeptide (NEFL) of Sus scrofa (Pig).